The primary structure comprises 368 residues: Proline-rich protein 5-like (368 aa).

Residue S28 is modified to Phosphoserine. The tract at residues 327 to 368 is disordered; that stretch reads PSFPPPHRQCSSEPNITDNPDGLEEGARGSQEGSELNCASLS. Composition is skewed to polar residues over residues 335-344 and 357-368; these read QCSSEPNITD and QEGSELNCASLS.

This sequence belongs to the PROTOR family. As to quaternary structure, interacts with the mammalian target of rapamycin complex 2 (mTORC2) which contains MTOR, MLST8, PRR5, RICTOR, MAPKAP1 and DEPTOR. Interacts with RFFL. Interacts (via C-terminus) with ZFP36 (via C-terminus); this interaction may accelerate ZFP36-mediated mRNA decay during stress. Interacts with RICTOR. Ubiquitinated. Ubiquitination by RFFL promotes proteasomal degradation of PRR5L thereby modifying the substrate-specific activity of the mTORC2 complex. Ubiquitination by RFFL is stimulated by LPA/lysophosphatidic acid.

Functionally, associates with the mTORC2 complex that regulates cellular processes including survival and organization of the cytoskeleton. Regulates the activity of the mTORC2 complex in a substrate-specific manner preventing for instance the specific phosphorylation of PKCs and thereby controlling cell migration. Plays a role in the stimulation of ZFP36-mediated mRNA decay of several ZFP36-associated mRNAs, such as TNF-alpha and GM-CSF, in response to stress. Required for ZFP36 localization to cytoplasmic stress granule (SG) and P-body (PB) in response to stress. This Homo sapiens (Human) protein is Proline-rich protein 5-like (PRR5L).